Consider the following 270-residue polypeptide: Interleukin-1 alpha (270 aa).

Residues 1-112 (MAKVPDLFED…DTEEEIIKPR (112 aa)) constitute a propeptide that is removed on maturation. Lysine 82 carries the N6-acetyllysine modification. The interval 82–86 (KKRRL) is nuclear localization signal (NLS). Phosphoserine is present on serine 87. 2 N-linked (GlcNAc...) asparagine glycosylation sites follow: asparagine 102 and asparagine 141.

Belongs to the IL-1 family. In terms of assembly, monomer. Interacts with TMED10; the interaction mediates the translocation from the cytoplasm into the ERGIC (endoplasmic reticulum-Golgi intermediate compartment) and thereby secretion. Interacts with IL1R1. Interacts with S100A13; this interaction is the first step in the export of IL1A, followed by direct translocation of this complex across the plasma membrane. Acetylated within its nuclear localization sequence, which impacts subcellular localization. Post-translationally, proteolytic processed by CAPN1 in a calcium-dependent manner. Cleavage from 31 kDa precursor to 18 kDa biologically active molecules. In terms of processing, phosphorylated. Phosphorylation greatly enhances susceptibility to digestion and promotes the conversion of pre-IL1A alpha to the biologically active IL1A.

Its subcellular location is the nucleus. It localises to the cytoplasm. It is found in the secreted. Cytokine constitutively present intracellularly in nearly all resting non-hematopoietic cells that plays an important role in inflammation and bridges the innate and adaptive immune systems. After binding to its receptor IL1R1 together with its accessory protein IL1RAP, forms the high affinity interleukin-1 receptor complex. Signaling involves the recruitment of adapter molecules such as MYD88, IRAK1 or IRAK4. In turn, mediates the activation of NF-kappa-B and the three MAPK pathways p38, p42/p44 and JNK pathways. Within the cell, acts as an alarmin and cell death results in its liberation in the extracellular space after disruption of the cell membrane to induce inflammation and alert the host to injury or damage. In addition to its role as a danger signal, which occurs when the cytokine is passively released by cell necrosis, directly senses DNA damage and acts as signal for genotoxic stress without loss of cell integrity. This is Interleukin-1 alpha (IL1A) from Sus scrofa (Pig).